We begin with the raw amino-acid sequence, 51 residues long: uncharacterized protein (51 aa).

Positions 1-28 are disordered; it reads MQQPQNITTSSISNNNNNNTSLTLQQQQ. Residues 13-47 adopt a coiled-coil conformation; it reads SNNNNNNTSLTLQQQQEQLQQLQIKRKRNLMKQLQ.

This is an uncharacterized protein from Dictyostelium discoideum (Social amoeba).